The chain runs to 462 residues: Na(+)/H(+) antiporter NhaA (462 aa).

11 consecutive transmembrane segments (helical) span residues 24–44 (ISGL…NLPL), 66–86 (LPIG…TVGL), 102–122 (AAAV…ILFL), 156–176 (GWAV…ALFA), 196–216 (LLAI…YWFI), 235–255 (PWIA…EAGI), 256–275 (HPTL…VMHG), 290–310 (PFSA…VHFE), 312–332 (MSPL…LVVG), 361–381 (MIPA…IASL), and 392–412 (ARFG…VLLS).

It belongs to the NhaA Na(+)/H(+) (TC 2.A.33) antiporter family.

It is found in the cell membrane. The enzyme catalyses Na(+)(in) + 2 H(+)(out) = Na(+)(out) + 2 H(+)(in). In terms of biological role, na(+)/H(+) antiporter that extrudes sodium in exchange for external protons. The sequence is that of Na(+)/H(+) antiporter NhaA from Bifidobacterium breve (strain NCIMB 8807 / UCC2003).